Here is an 874-residue protein sequence, read N- to C-terminus: Probable RNA-directed RNA polymerase (874 aa).

This sequence belongs to the totiviridae RNA-directed RNA polymerase family.

It catalyses the reaction RNA(n) + a ribonucleoside 5'-triphosphate = RNA(n+1) + diphosphate. Functionally, RNA-dependent RNA polymerase which replicates the viral genome. Catalyzes the transcription of fully conservative plus-strand genomic RNAs that are extruded from the virion into the cytoplasm where they function as mRNAs for translation of viral proteins and also as substrates for encapsidation to form new virions. Once encapsidated, the positive strand is converted to dsRNA by the RNA-directed RNA polymerase. Displays ssRNA-binding activity. The protein is Probable RNA-directed RNA polymerase (ORF3) of Leishmania major (LRV-1-1).